A 103-amino-acid polypeptide reads, in one-letter code: High-potential iron-sulfur protein (103 aa).

An N-terminal signal peptide occupies residues 1-28; it reads MSNRRLFLKSIPIMAAAGAVGMAGLARA. Cys-66, Cys-69, Cys-82, and Cys-96 together coordinate [4Fe-4S] cluster.

It belongs to the high-potential iron-sulfur protein (HiPIP) family. Homodimer.

The protein resides in the periplasm. Specific class of high-redox-potential 4Fe-4S ferredoxins. Functions in anaerobic electron transport in most purple and in some other photosynthetic bacteria and in at least one genus (Paracoccus) of halophilic, denitrifying bacteria. The polypeptide is High-potential iron-sulfur protein (hip) (Ralstonia nicotianae (strain ATCC BAA-1114 / GMI1000) (Ralstonia solanacearum)).